The primary structure comprises 176 residues: uncharacterized protein (176 aa).

This is an uncharacterized protein from Methanocaldococcus jannaschii (strain ATCC 43067 / DSM 2661 / JAL-1 / JCM 10045 / NBRC 100440) (Methanococcus jannaschii).